The chain runs to 95 residues: Large ribosomal subunit protein uL22c (95 aa).

It belongs to the universal ribosomal protein uL22 family. In terms of assembly, part of the 50S ribosomal subunit.

It localises to the plastid. The protein localises to the chloroplast. Its function is as follows. This protein binds specifically to 23S rRNA. In terms of biological role, the globular domain of the protein is located near the polypeptide exit tunnel on the outside of the subunit, while an extended beta-hairpin is found that lines the wall of the exit tunnel in the center of the 70S ribosome. In Cyanidioschyzon merolae (strain NIES-3377 / 10D) (Unicellular red alga), this protein is Large ribosomal subunit protein uL22c (rpl22).